A 141-amino-acid polypeptide reads, in one-letter code: Putative pre-16S rRNA nuclease (141 aa).

It belongs to the YqgF nuclease family.

Its subcellular location is the cytoplasm. Could be a nuclease involved in processing of the 5'-end of pre-16S rRNA. The protein is Putative pre-16S rRNA nuclease of Coxiella burnetii (strain RSA 331 / Henzerling II).